A 257-amino-acid polypeptide reads, in one-letter code: Probable amino-acid ABC transporter-binding protein HI_1080 (257 aa).

The first 23 residues, 1–23, serve as a signal peptide directing secretion; the sequence is MKKLLFTTALLTGAIAFSTFSHA.

It belongs to the bacterial solute-binding protein 3 family.

It localises to the periplasm. Functionally, probably part of a binding-protein-dependent transport system for an amino acid. The chain is Probable amino-acid ABC transporter-binding protein HI_1080 from Haemophilus influenzae (strain ATCC 51907 / DSM 11121 / KW20 / Rd).